Here is a 220-residue protein sequence, read N- to C-terminus: Ribosome assembly protein 3 (220 aa).

The segment at 1–91 (MSAGDISAIN…VSDVELTDEE (91 aa)) is disordered. The segment covering 13–24 (SVKKNRRRKKRR) has biased composition (basic residues). Residues 29 to 39 (SSSDSSSSDPS) show a composition bias toward low complexity. The span at 41–72 (ESEKEEIQNGAIEEHVGENGKSDHVFSKGNDE) shows a compositional bias: basic and acidic residues. Residues 73-91 (DKQEDIAIEVSDVELTDEE) are compositionally biased toward acidic residues. Residue Ser83 is modified to Phosphoserine. Thr88 is subject to Phosphothreonine. Ser99 bears the Phosphoserine mark.

This sequence belongs to the RSA3 family. Associates with nucleolar pre-ribosomal particles. Interacts with DBP6. Together with DBP6, NOP8, URB1 and URB2, forms an RNA-independent complex, which is required during early maturation of nascent 60S ribosomal subunits.

It is found in the nucleus. The protein resides in the nucleolus. Required for efficient biogenesis of the 60S ribosomal subunit. This chain is Ribosome assembly protein 3 (RSA3), found in Saccharomyces cerevisiae (strain ATCC 204508 / S288c) (Baker's yeast).